The following is a 548-amino-acid chain: Putative ATP-dependent RNA helicase R290 (548 aa).

In terms of domain architecture, Helicase ATP-binding spans 38-206 (INKVINGEDV…CKVLQLKTNE (169 aa)). Position 51-58 (51-58 (LMTSAGKS)) interacts with ATP. Residues 150–153 (DEAH) carry the DEAH box motif. The region spanning 231–376 (DIVPIINKYP…KTQLALLEQM (146 aa)) is the Helicase C-terminal domain.

It belongs to the DEAD box helicase family. DEAH subfamily.

The catalysed reaction is ATP + H2O = ADP + phosphate + H(+). The chain is Putative ATP-dependent RNA helicase R290 from Acanthamoeba polyphaga mimivirus (APMV).